Consider the following 387-residue polypeptide: Phosphoglycerate kinase (387 aa).

Residues 21-23 (DLN), R36, 59-62 (HLGR), R113, and R146 each bind substrate. ATP-binding positions include K197, E314, and 340–343 (GGDT).

It belongs to the phosphoglycerate kinase family. In terms of assembly, monomer.

It localises to the cytoplasm. The enzyme catalyses (2R)-3-phosphoglycerate + ATP = (2R)-3-phospho-glyceroyl phosphate + ADP. Its pathway is carbohydrate degradation; glycolysis; pyruvate from D-glyceraldehyde 3-phosphate: step 2/5. The polypeptide is Phosphoglycerate kinase (Salmonella schwarzengrund (strain CVM19633)).